Consider the following 184-residue polypeptide: Holliday junction branch migration complex subunit RuvA (184 aa).

The interval 1-61 is domain I; it reads MIAALRGNIF…ENEYTLYGFA (61 aa). The interval 62 to 135 is domain II; that stretch reads DKNEKKLFDS…GEFEVVFEEQ (74 aa). Gln-135 is a region of interest (flexible linker). A domain III region spans residues 135 to 184; sequence QNPVFNQALSALESLGFNKNDIVKALNGIKSDNLEETIKLALKKLSKDIK.

It belongs to the RuvA family. Homotetramer. Forms an RuvA(8)-RuvB(12)-Holliday junction (HJ) complex. HJ DNA is sandwiched between 2 RuvA tetramers; dsDNA enters through RuvA and exits via RuvB. An RuvB hexamer assembles on each DNA strand where it exits the tetramer. Each RuvB hexamer is contacted by two RuvA subunits (via domain III) on 2 adjacent RuvB subunits; this complex drives branch migration. In the full resolvosome a probable DNA-RuvA(4)-RuvB(12)-RuvC(2) complex forms which resolves the HJ.

Its subcellular location is the cytoplasm. The RuvA-RuvB-RuvC complex processes Holliday junction (HJ) DNA during genetic recombination and DNA repair, while the RuvA-RuvB complex plays an important role in the rescue of blocked DNA replication forks via replication fork reversal (RFR). RuvA specifically binds to HJ cruciform DNA, conferring on it an open structure. The RuvB hexamer acts as an ATP-dependent pump, pulling dsDNA into and through the RuvAB complex. HJ branch migration allows RuvC to scan DNA until it finds its consensus sequence, where it cleaves and resolves the cruciform DNA. This chain is Holliday junction branch migration complex subunit RuvA, found in Nautilia profundicola (strain ATCC BAA-1463 / DSM 18972 / AmH).